Reading from the N-terminus, the 747-residue chain is Major facilitator superfamily domain-containing protein 6-B (747 aa).

11 helical membrane passes run 15–35 (LLFF…CVLQ), 75–95 (KAVL…IGFV), 222–242 (TIFL…APAV), 271–291 (WGIA…TIFI), 306–326 (IAFI…TQFH), 391–411 (VLFV…FLFW), 420–440 (TTLF…AYFI), 453–470 (VLYI…YISY), 485–507 (GLTH…PPAL), 520–540 (LGLG…FFGA), and 546–566 (GLGM…WLLG). Composition is skewed to polar residues over residues 597–606 (NQSTSQPNSD) and 652–668 (NNDC…QTSA). Disordered regions lie at residues 597-625 (NQST…NKPA) and 652-747 (NNDC…PTTH). Low complexity predominate over residues 675-685 (STSSQPNASSS).

It belongs to the major facilitator superfamily. MFSD6 family.

It localises to the membrane. This Danio rerio (Zebrafish) protein is Major facilitator superfamily domain-containing protein 6-B (mfsd6b).